Reading from the N-terminus, the 108-residue chain is Glutaredoxin-1 (108 aa).

In terms of domain architecture, Glutaredoxin spans 3 to 106; the sequence is EEFVQQRLAN…DILSSIGVLR (104 aa). Residues Cys-23 and Cys-26 are joined by a disulfide bond.

Belongs to the glutaredoxin family.

The protein resides in the virion. Has thioltransferase and dehydroascorbate reductase activities. The protein is Glutaredoxin-1 (OPG075) of Cowpox virus (strain GRI-90 / Grishak) (CPV).